We begin with the raw amino-acid sequence, 542 residues long: CTP synthase (542 aa).

The tract at residues 1–265 (MARYVFITGG…DSEVLSAFGI (265 aa)) is amidoligase domain. Residue serine 13 participates in CTP binding. Serine 13 provides a ligand contact to UTP. Residue 14–19 (SLGKGI) coordinates ATP. Residue tyrosine 54 coordinates L-glutamine. Aspartate 71 provides a ligand contact to ATP. Residues aspartate 71 and glutamate 139 each contribute to the Mg(2+) site. Residues 146-148 (DIE), 186-191 (KTKPTQ), and lysine 222 each bind CTP. Residues 186 to 191 (KTKPTQ) and lysine 222 contribute to the UTP site. Positions 291–541 (TIAIVGKYTG…IEAAIEQSRL (251 aa)) constitute a Glutamine amidotransferase type-1 domain. L-glutamine is bound at residue glycine 353. Cysteine 380 (nucleophile; for glutamine hydrolysis) is an active-site residue. Residues 381–384 (FGMQ), glutamate 404, and arginine 469 contribute to the L-glutamine site. Catalysis depends on residues histidine 514 and glutamate 516.

This sequence belongs to the CTP synthase family. As to quaternary structure, homotetramer.

It carries out the reaction UTP + L-glutamine + ATP + H2O = CTP + L-glutamate + ADP + phosphate + 2 H(+). It catalyses the reaction L-glutamine + H2O = L-glutamate + NH4(+). The catalysed reaction is UTP + NH4(+) + ATP = CTP + ADP + phosphate + 2 H(+). Its pathway is pyrimidine metabolism; CTP biosynthesis via de novo pathway; CTP from UDP: step 2/2. With respect to regulation, allosterically activated by GTP, when glutamine is the substrate; GTP has no effect on the reaction when ammonia is the substrate. The allosteric effector GTP functions by stabilizing the protein conformation that binds the tetrahedral intermediate(s) formed during glutamine hydrolysis. Inhibited by the product CTP, via allosteric rather than competitive inhibition. Catalyzes the ATP-dependent amination of UTP to CTP with either L-glutamine or ammonia as the source of nitrogen. Regulates intracellular CTP levels through interactions with the four ribonucleotide triphosphates. The sequence is that of CTP synthase from Brucella anthropi (strain ATCC 49188 / DSM 6882 / CCUG 24695 / JCM 21032 / LMG 3331 / NBRC 15819 / NCTC 12168 / Alc 37) (Ochrobactrum anthropi).